The sequence spans 636 residues: MGEKDKLHEISSKFASLGLGSLKSTPKARETTEPPPPSSQQPPSTPNGKEAASPSALKQNVRPSLNSVQQTPASIDAVASSSNVSLQSQQPLSKPVVSSKPNQTTAMPPPSNNPSRHVSSTSNKPAAVSPNPAAHHAELPSGSVPPSASVSRANSTATTTPHKAGVVSNPAAANVHVLSVAASPNPSTPSNGPAPVSTTATPSRNPVTRLQRIFSQNSVSRQNSRTGRGAAVANTEETNSTGGSETGGAANSSSTSNPSSAKWSRFTVYDDASHTHQLRPARRQEKLGKMLKDFLAGNSKKREEERIAKEAADAQHQLSLVQSWINGYGQEKLADKKDPAKVSASFVEKYGRCQEVIGRGAFGVVRIAHKVDPQNSGSETLYAVKEFRRKPAESQKKYTKRLTSEFCISSSLRHPNVIHTLDLIQDGKGDYCEVMELCSGGDLYTLIMAAGRLEPMEADCFFKQLMRGVDYLHDMGVAHRDLKPENLLLTVSGSLKITDFGNGECFRMAWEKEAHMTCGLCGSAPYIAPEEYTESEFDPRAVDVWACGVIYMAMRTGRHLWRVAKKSEDEYYSRYLMDRKNESGYEPIEMLERSRCRNTLYNILHPNPTYRLTAKQIMKSEWVRSITLCEAGNAGL.

Positions 1-11 (MGEKDKLHEIS) are enriched in basic and acidic residues. Disordered regions lie at residues 1 to 167 (MGEK…AGVV) and 181 to 261 (AASP…PSSA). The segment covering 33 to 45 (EPPPPSSQQPPST) has biased composition (pro residues). 2 stretches are compositionally biased toward polar residues: residues 56–92 (ALKQNVRPSLNSVQQTPASIDAVASSSNVSLQSQQPL) and 113–124 (NPSRHVSSTSNK). Positions 140–155 (PSGSVPPSASVSRANS) are enriched in low complexity. The segment covering 182–226 (ASPNPSTPSNGPAPVSTTATPSRNPVTRLQRIFSQNSVSRQNSRT) has biased composition (polar residues). Residue Ser218 is modified to Phosphoserine. Over residues 234–261 (NTEETNSTGGSETGGAANSSSTSNPSSA) the composition is skewed to low complexity. Phosphothreonine is present on residues Thr238 and Thr241. Ser299 bears the Phosphoserine mark. One can recognise a Protein kinase domain in the interval 351–623 (GRCQEVIGRG…AKQIMKSEWV (273 aa)). Residues 357–365 (IGRGAFGVV) and Lys385 contribute to the ATP site. The active-site Proton acceptor is Asp481.

This sequence belongs to the protein kinase superfamily. Ser/Thr protein kinase family. In terms of assembly, interacts with sty1.

The protein resides in the cytoplasm. It catalyses the reaction L-seryl-[protein] + ATP = O-phospho-L-seryl-[protein] + ADP + H(+). The enzyme catalyses L-threonyl-[protein] + ATP = O-phospho-L-threonyl-[protein] + ADP + H(+). Promotes K(+) uptake, by the potassium transporter trk1-trk2, which leads to the subsequent cellular resistance to toxic cations such as Na(+), Li(+) and Ca(2+). This Schizosaccharomyces pombe (strain 972 / ATCC 24843) (Fission yeast) protein is Serine/threonine-protein kinase hal4 (hal4).